The chain runs to 195 residues: dITP/XTP pyrophosphatase (195 aa).

Substrate is bound at residue 8 to 13 (TNNQGK). Positions 39 and 68 each coordinate Mg(2+). Catalysis depends on aspartate 68, which acts as the Proton acceptor. Substrate contacts are provided by residues serine 69, 149–152 (FGYD), lysine 172, and 177–178 (HR).

The protein belongs to the HAM1 NTPase family. As to quaternary structure, homodimer. It depends on Mg(2+) as a cofactor.

It catalyses the reaction XTP + H2O = XMP + diphosphate + H(+). The catalysed reaction is dITP + H2O = dIMP + diphosphate + H(+). The enzyme catalyses ITP + H2O = IMP + diphosphate + H(+). Its function is as follows. Pyrophosphatase that catalyzes the hydrolysis of nucleoside triphosphates to their monophosphate derivatives, with a high preference for the non-canonical purine nucleotides XTP (xanthosine triphosphate), dITP (deoxyinosine triphosphate) and ITP. Seems to function as a house-cleaning enzyme that removes non-canonical purine nucleotides from the nucleotide pool, thus preventing their incorporation into DNA/RNA and avoiding chromosomal lesions. This chain is dITP/XTP pyrophosphatase, found in Staphylococcus epidermidis (strain ATCC 12228 / FDA PCI 1200).